We begin with the raw amino-acid sequence, 400 residues long: Betaine--homocysteine S-methyltransferase 1 (400 aa).

In terms of domain architecture, Hcy-binding spans 8 to 309; it reads RGVLERLNAG…YHIRAVAEEL (302 aa). Zn(2+)-binding residues include Cys212, Cys294, and Cys295.

In terms of assembly, homotetramer. The cofactor is Zn(2+).

It localises to the cytoplasm. The catalysed reaction is L-homocysteine + glycine betaine = N,N-dimethylglycine + L-methionine. The protein operates within amine and polyamine degradation; betaine degradation; sarcosine from betaine: step 1/2. Its pathway is amino-acid biosynthesis; L-methionine biosynthesis via de novo pathway; L-methionine from L-homocysteine (BhmT route): step 1/1. Its function is as follows. Involved in the regulation of homocysteine metabolism. Converts betaine and homocysteine to dimethylglycine and methionine, respectively. This reaction is also required for the irreversible oxidation of choline. The chain is Betaine--homocysteine S-methyltransferase 1 (bhmt) from Danio rerio (Zebrafish).